We begin with the raw amino-acid sequence, 423 residues long: Transcription factor AP-2-epsilon (423 aa).

The segment at 1–108 (MLVHSYSSME…EDAGLLSQPH (108 aa)) is disordered. Over residues 14-27 (GLSSSSPGGRLSQL) the composition is skewed to low complexity. The PPxY motif signature appears at 50 to 55 (YFPPPY). Positions 57–70 (QSSLSYSQSQDGGY) are enriched in low complexity. Polar residues predominate over residues 79-93 (SLNSLHQHQQAAWHS). The interval 276 to 405 (RRKAANVTLL…YLLEALKLLD (130 aa)) is H-S-H (helix-span-helix), dimerization.

This sequence belongs to the AP-2 family. As to quaternary structure, binds DNA as a dimer. Can form homodimers or heterodimers with other AP-2 family members.

The protein localises to the nucleus. Sequence-specific DNA-binding protein that interacts with inducible viral and cellular enhancer elements to regulate transcription of selected genes. AP-2 factors bind to the consensus sequence 5'-GCCNNNGGC-3' and activate genes involved in a large spectrum of important biological functions. This Danio rerio (Zebrafish) protein is Transcription factor AP-2-epsilon.